A 196-amino-acid polypeptide reads, in one-letter code: MRSAVQWRLCWENDLQLTDHVELSDFFRKIYGRIGSFDAKPFEGGRSWAGARPEVRLIASDAQGIAAHVGILRRFIKVGEVDFLVAELGLYGVRPDLEKLGISFSMRMVHPVLQQLAVPFAFGTVRHAMRSHVERFCREGIAAIVPGVKVRSSRANVHHDLPSTRLEDVIVLVSPIGRSIDEWPPGDVIDRNGSEL.

Belongs to the NodA family.

It is found in the cytoplasm. N-acyltransferase required for nodulation. Acts in the production of a small, heat-stable compound (Nod) that stimulates mitosis in various plant protoplasts. The sequence is that of Nodulation protein A from Mesorhizobium sp. (strain 7653R).